The sequence spans 347 residues: GMP reductase (347 aa).

108–131 serves as a coordination point for NADP(+); it reads ADFIKLSEILAMSEELNFICIDIA. 2 residues coordinate K(+): Gly-181 and Gly-183. Catalysis depends on Cys-186, which acts as the Thioimidate intermediate. 216 to 239 provides a ligand contact to NADP(+); the sequence is IIGDGGCSCAGDVAKAFGGGADFV.

It belongs to the IMPDH/GMPR family. GuaC type 1 subfamily. Homotetramer.

It catalyses the reaction IMP + NH4(+) + NADP(+) = GMP + NADPH + 2 H(+). Functionally, catalyzes the irreversible NADPH-dependent deamination of GMP to IMP. It functions in the conversion of nucleobase, nucleoside and nucleotide derivatives of G to A nucleotides, and in maintaining the intracellular balance of A and G nucleotides. This Shewanella halifaxensis (strain HAW-EB4) protein is GMP reductase.